Here is an 89-residue protein sequence, read N- to C-terminus: Large ribosomal subunit protein bL27 (89 aa).

Residues 1 to 23 (MAHKKAGGSSRNGRDSAGKRLGI) are disordered.

The protein belongs to the bacterial ribosomal protein bL27 family.

This Rhodopseudomonas palustris (strain BisA53) protein is Large ribosomal subunit protein bL27.